The following is a 153-amino-acid chain: Methylglyoxal synthase (153 aa).

Residues 6-153 form the MGS-like domain; the sequence is RTIAARKHIA…QRYLAERLPS (148 aa). Substrate contacts are provided by residues histidine 19, lysine 23, 45–48, and 65–66; these read TGTT and SG. Aspartate 71 functions as the Proton donor/acceptor in the catalytic mechanism. Substrate is bound at residue histidine 98.

Belongs to the methylglyoxal synthase family.

It carries out the reaction dihydroxyacetone phosphate = methylglyoxal + phosphate. Functionally, catalyzes the formation of methylglyoxal from dihydroxyacetone phosphate. This Sodalis glossinidius (strain morsitans) protein is Methylglyoxal synthase.